We begin with the raw amino-acid sequence, 493 residues long: Dipeptide permease D (493 aa).

A run of 13 helical transmembrane segments spans residues 14 to 34 (VVAL…LLIL), 49 to 69 (ALFS…GYLA), 91 to 111 (LVLG…AIIV), 138 to 158 (GGFS…PIAC), 167 to 187 (WAMG…IFLC), 212 to 232 (NWGW…VLFW), 235 to 255 (WAVY…GKIY), 267 to 287 (LGLI…AQQG), 312 to 332 (MFQS…AWLI), 344 to 364 (IWGK…ILTL), 379 to 399 (LMIA…PVAM), 413 to 433 (VLTG…AGVI), and 458 to 478 (VFSE…LIWL).

It belongs to the major facilitator superfamily. Proton-dependent oligopeptide transporter (POT/PTR) (TC 2.A.17) family. DtpD subfamily.

It is found in the cell inner membrane. Probable proton-dependent permease that transports dipeptides. The sequence is that of Dipeptide permease D from Citrobacter rodentium (strain ICC168) (Citrobacter freundii biotype 4280).